A 135-amino-acid chain; its full sequence is MRIIQTTGKRKTAIARAVIREGKGRVRINGKPVEIIEPEIARFTILEPLILAGEEIWNSVDIDVKVEGGGFMGQAEAARMAIARALVEWTGDMSLKEKFMKYDRTMLVGDPRRTEPHKPNRSTKGPRAKRQKSYR.

Positions 107 to 118 are enriched in basic and acidic residues; the sequence is LVGDPRRTEPHK. Residues 107–135 are disordered; sequence LVGDPRRTEPHKPNRSTKGPRAKRQKSYR. Residues 119–135 are compositionally biased toward basic residues; it reads PNRSTKGPRAKRQKSYR.

This sequence belongs to the universal ribosomal protein uS9 family. In terms of assembly, part of the 30S ribosomal subunit.

This is Small ribosomal subunit protein uS9 from Pyrococcus furiosus (strain ATCC 43587 / DSM 3638 / JCM 8422 / Vc1).